The chain runs to 95 residues: Small ribosomal subunit protein bS6 (95 aa).

This sequence belongs to the bacterial ribosomal protein bS6 family.

Functionally, binds together with bS18 to 16S ribosomal RNA. The sequence is that of Small ribosomal subunit protein bS6 from Exiguobacterium sibiricum (strain DSM 17290 / CCUG 55495 / CIP 109462 / JCM 13490 / 255-15).